A 690-amino-acid polypeptide reads, in one-letter code: Protein arginine N-methyltransferase 7 (690 aa).

SAM-dependent MTase PRMT-type domains are found at residues 5–355 (FQDS…FSLW) and 364–690 (KEPL…EEEQ).

It belongs to the class I-like SAM-binding methyltransferase superfamily. Protein arginine N-methyltransferase family. PRMT7 subfamily.

In terms of biological role, essential arginine methyltransferase that can both catalyze the formation of omega-N monomethylarginine (MMA) and symmetrical dimethylarginine (sDMA). Specifically mediates the symmetrical dimethylation of arginine residues in the small nuclear ribonucleoproteins SmD1 and SmD3. In Anopheles gambiae (African malaria mosquito), this protein is Protein arginine N-methyltransferase 7 (Art7).